Consider the following 318-residue polypeptide: Malate dehydrogenase (318 aa).

NAD(+) is bound by residues 10-15 and D34; that span reads GAGNIG. R83 and R89 together coordinate substrate. Residues N96 and 119–121 contribute to the NAD(+) site; that span reads ITN. 2 residues coordinate substrate: N121 and R152. H176 serves as the catalytic Proton acceptor.

This sequence belongs to the LDH/MDH superfamily. MDH type 3 family.

The enzyme catalyses (S)-malate + NAD(+) = oxaloacetate + NADH + H(+). Its function is as follows. Catalyzes the reversible oxidation of malate to oxaloacetate. The sequence is that of Malate dehydrogenase from Rhodospirillum rubrum (strain ATCC 11170 / ATH 1.1.1 / DSM 467 / LMG 4362 / NCIMB 8255 / S1).